Reading from the N-terminus, the 366-residue chain is Cobalt-precorrin-5B C(1)-methyltransferase (366 aa).

The protein belongs to the CbiD family.

The enzyme catalyses Co-precorrin-5B + S-adenosyl-L-methionine = Co-precorrin-6A + S-adenosyl-L-homocysteine. The protein operates within cofactor biosynthesis; adenosylcobalamin biosynthesis; cob(II)yrinate a,c-diamide from sirohydrochlorin (anaerobic route): step 6/10. Its function is as follows. Catalyzes the methylation of C-1 in cobalt-precorrin-5B to form cobalt-precorrin-6A. The polypeptide is Cobalt-precorrin-5B C(1)-methyltransferase (Paraburkholderia phymatum (strain DSM 17167 / CIP 108236 / LMG 21445 / STM815) (Burkholderia phymatum)).